The following is a 347-amino-acid chain: Adenine deaminase (347 aa).

Residues His16, His18, and His204 each coordinate Zn(2+). Catalysis depends on Glu207, which acts as the Proton donor. Asp285 is a Zn(2+) binding site. A substrate-binding site is contributed by Asp286.

It belongs to the metallo-dependent hydrolases superfamily. Adenosine and AMP deaminases family. Adenine deaminase type 2 subfamily. The cofactor is Zn(2+). Probably ubiquitinated when cells enter quiescence in response to nutrient limitation, since it is specifically degraded via a process requiring the F-box protein SAF1 and components of the SKP1-Cullin-F-box complex.

Its subcellular location is the cytoplasm. It localises to the nucleus. The enzyme catalyses adenine + H2O + H(+) = hypoxanthine + NH4(+). Functionally, catalyzes the hydrolytic deamination of adenine to hypoxanthine. Plays an important role in the purine salvage pathway and in nitrogen catabolism. Also exhibits a low activity towards N(6)-substituted adenines that are commonly known as the plant hormones cytokinins. In Saccharomyces cerevisiae (strain ATCC 204508 / S288c) (Baker's yeast), this protein is Adenine deaminase.